The following is a 963-amino-acid chain: Unconventional myosin-XIX (963 aa).

One can recognise a Myosin motor domain in the interval 35–758 (HQLDDLTKVN…MLELLECGRA (724 aa)). ATP is bound at residue 132–139 (GESGAGKT). Residues 602 to 624 (LEQLLQVLHNTTPHYIRCIKPNS) form an actin-binding region. 2 IQ domains span residues 762 to 782 (EQCA…KQEK) and 783 to 812 (QRRA…AATV). The interval 829-963 (SKELDGMEEK…LLESHRPVQV (135 aa)) is myMOMA region.

It belongs to the TRAFAC class myosin-kinesin ATPase superfamily. Myosin family. As to quaternary structure, myosin is a hexamer of 2 heavy chains and 4 light chains: interacts with myosin light chains MYL9 and MYL12B.

The protein resides in the mitochondrion outer membrane. Its subcellular location is the cytoplasm. It localises to the cytoskeleton. Functionally, actin-based motor molecule with ATPase activity that localizes to the mitochondrion outer membrane. Motor protein that moves towards the plus-end of actin filaments. Required for mitochondrial inheritance during mitosis. May be involved in mitochondrial transport or positioning. The protein is Unconventional myosin-XIX of Mus musculus (Mouse).